The primary structure comprises 227 residues: Small ribosomal subunit protein uS3 (227 aa).

A KH type-2 domain is found at 24–94 (LDEYLEEELG…RVSIEVKELP (71 aa)). Residues 207–227 (EEVEDELKELIGKSEDEAEGA) form a disordered region.

This sequence belongs to the universal ribosomal protein uS3 family. In terms of assembly, part of the 30S ribosomal subunit.

Binds the lower part of the 30S subunit head. The protein is Small ribosomal subunit protein uS3 of Methanopyrus kandleri (strain AV19 / DSM 6324 / JCM 9639 / NBRC 100938).